A 79-amino-acid polypeptide reads, in one-letter code: Cytoinsectotoxin-3 (79 aa).

It belongs to the cationic peptide 06 (cytoinsectotoxin) family. As to expression, expressed by the venom gland.

It localises to the secreted. Functionally, insecticidal and antimicrobial peptide. Has insecticidal activity against larvae of flesh fly S.carnaria. Has antibacterial activity against Gram-positive bacterium B.subtilis B-501 (MIC=0.63 uM) and Gram-negative bacterium E.coli DH5alpha (MIC=2.5 uM). The polypeptide is Cytoinsectotoxin-3 (Lachesana tarabaevi (Spider)).